The chain runs to 227 residues: MSLREICSQELVEFKGNKRGIIVNIKREAPFEEIQEKIINKLEAYVGFFNGAKISKINSDCLTDMEILELKEGITSRFDVEFVEDQKIEENSNFPTKYVNTLRSGENIEFEGDVVILNDMKPGSKVLSKSNTVVMGDINAGAKVVAGGNVFVMGKIEGFVHAGAEGNEFAYVVAGNLNPKILQIADNIAEAPDDEENYESESEISPEIAFVSNGRIVIESYLSKLDK.

This sequence belongs to the MinC family. As to quaternary structure, interacts with MinD and FtsZ.

Functionally, cell division inhibitor that blocks the formation of polar Z ring septums. Rapidly oscillates between the poles of the cell to destabilize FtsZ filaments that have formed before they mature into polar Z rings. Prevents FtsZ polymerization. The protein is Probable septum site-determining protein MinC of Clostridioides difficile (strain 630) (Peptoclostridium difficile).